A 237-amino-acid polypeptide reads, in one-letter code: B3 domain-containing protein At1g20600 (237 aa).

A disordered region spans residues 53 to 79 (LVSQANQKQSRKREEKTEKNQPKRVKN). Residues 64–73 (KREEKTEKNQ) are compositionally biased toward basic and acidic residues. The TF-B3 DNA-binding region spans 126 to 230 (KKQLMSSDVD…LEHVFIRGSK (105 aa)).

Its subcellular location is the nucleus. The polypeptide is B3 domain-containing protein At1g20600 (Arabidopsis thaliana (Mouse-ear cress)).